The following is a 125-amino-acid chain: Small ribosomal subunit protein uS13 (125 aa).

The tract at residues 95 to 125 (GLPLRGQRTKTNARTRKGKRKTVANKKIASK) is disordered.

It belongs to the universal ribosomal protein uS13 family. Part of the 30S ribosomal subunit. Forms a loose heterodimer with protein S19. Forms two bridges to the 50S subunit in the 70S ribosome.

Located at the top of the head of the 30S subunit, it contacts several helices of the 16S rRNA. In the 70S ribosome it contacts the 23S rRNA (bridge B1a) and protein L5 of the 50S subunit (bridge B1b), connecting the 2 subunits; these bridges are implicated in subunit movement. Contacts the tRNAs in the A and P-sites. The protein is Small ribosomal subunit protein uS13 of Borreliella burgdorferi (strain ATCC 35210 / DSM 4680 / CIP 102532 / B31) (Borrelia burgdorferi).